The following is a 1325-amino-acid chain: Nonribosomal peptide synthetase (1325 aa).

An adenylation region spans residues 248 to 644; it reads YQQLDRLSTR…LGEIEYQIQQ (397 aa). The region spanning 779 to 856 is the Carrier domain; that stretch reads EIVNPGEITL…DQARLLRPLS (78 aa). Serine 816 bears the O-(pantetheine 4'-phosphoryl)serine mark. Residues 893-1310 are condensation; that stretch reads EDVYPCTPLQ…DDYSTTLHTL (418 aa).

It belongs to the NRP synthetase family. Pantetheine 4'-phosphate serves as cofactor.

Its pathway is antifungal biosynthesis. In terms of biological role, nonribosomal peptide synthetase; part of the gene cluster that mediates the biosynthesis of the tetrahydropyranyl antifungal agent lanomycin that acts as an inhibitor of CYP51 and blocks the ergosterol biosynthesis. The biosynthesis probably begins with the formation of an hexaketide, followed by methionine mediated alkylation of C-2 and C-6, and methylation of the reduced C-3 oxygen, pyran forming reductive ring closure, oxygenation of C-4, beta-keto reduction, enoyl reduction and dehydration of the remaining oxygens, and finally, acylation with glycine to complete the biosynthesis. This Pyrenophora dematioidea (Helminthosporium dematioideum) protein is Nonribosomal peptide synthetase.